We begin with the raw amino-acid sequence, 183 residues long: CASP-like protein UU2 (183 aa).

Topologically, residues 1 to 33 (MEESQQQSSKFDAPPSPYVPSRVYLAQIYWKKP) are cytoplasmic. Residues 34 to 54 (AIVVLRVLQFIFSLIAFSVMA) form a helical membrane-spanning segment. Over 55-72 (DVLHDVQGSIKSLSYTVA) the chain is Extracellular. The chain crosses the membrane as a helical span at residues 73 to 93 (IGVLACAYALAQLSFSLWCVI). Residues 94-118 (RGATSSAGVTPLYQYATFICDQMST) are Cytoplasmic-facing. Residues 119 to 139 (YFLISAASATATLIDVSGVCG) form a helical membrane-spanning segment. Residues 140–156 (SNGSGTNLCSRSTASVT) are Extracellular-facing. Residue Asn141 is glycosylated (N-linked (GlcNAc...) asparagine). The helical transmembrane segment at 157 to 177 (FAFLAFLAFSASSVLTGYYLV) threads the bilayer. The Cytoplasmic portion of the chain corresponds to 178–183 (KCILKA).

The protein belongs to the Casparian strip membrane proteins (CASP) family. As to quaternary structure, homodimer and heterodimers.

It localises to the cell membrane. This chain is CASP-like protein UU2, found in Selaginella moellendorffii (Spikemoss).